Here is a 364-residue protein sequence, read N- to C-terminus: Palmitoyltransferase ZDHHC9 (364 aa).

Residues 1 to 35 lie on the Cytoplasmic side of the membrane; it reads MSVMVVRKKVTRKWEKLPGRNTFCCDGRVMMARQK. The chain crosses the membrane as a helical span at residues 36-56; that stretch reads GIFYLTLFLILGTCTLFFAFE. The Lumenal segment spans residues 57–63; sequence CRYLAVQ. The chain crosses the membrane as a helical span at residues 64–84; the sequence is LSPAIPVFAAMLFLFSMATLL. Residues 85–183 lie on the Cytoplasmic side of the membrane; the sequence is RTSFSDPGVI…NCVGKRNYRY (99 aa). One can recognise a DHHC domain in the interval 139–189; sequence KYCYTCKIFRPPRASHCSICDNCVERFDHHCPWVGNCVGKRNYRYFYLFIL. C169 serves as the catalytic S-palmitoyl cysteine intermediate. Residues 184–204 form a helical membrane-spanning segment; sequence FYLFILSLSLLTIYVFAFNIV. Over 205-228 the chain is Lumenal; sequence YVALKSLKIGFLETLKETPGTVLE. The chain crosses the membrane as a helical span at residues 229–249; it reads VLICFFTLWSVVGLTGFHTFL. Over 250 to 364 the chain is Cytoplasmic; the sequence is VALNQTTNED…PPQEASEAEK (115 aa). Positions 303–364 are disordered; it reads PLEESGSRPP…PPQEASEAEK (62 aa). Residues 310-336 show a composition bias toward polar residues; sequence RPPSTQETSSSLLPQSPASTEHMNSNE. A compositionally biased stretch (pro residues) spans 346–356; the sequence is EMPPPEPPEPP.

The protein belongs to the DHHC palmitoyltransferase family. ERF2/ZDHHC9 subfamily. In terms of assembly, interacts with GOLGA7.

Its subcellular location is the endoplasmic reticulum membrane. It is found in the golgi apparatus membrane. It carries out the reaction L-cysteinyl-[protein] + hexadecanoyl-CoA = S-hexadecanoyl-L-cysteinyl-[protein] + CoA. Functionally, palmitoyltransferase that catalyzes the addition of palmitate onto various protein substrates, such as ADRB2, GSDMD, HRAS, NRAS and CGAS. The ZDHHC9-GOLGA7 complex is a palmitoyltransferase specific for HRAS and NRAS. May have a palmitoyltransferase activity toward the beta-2 adrenergic receptor/ADRB2 and therefore regulate G protein-coupled receptor signaling. Acts as a regulator of innate immunity by catalyzing palmitoylation of CGAS, thereby promoting CGAS homodimerization and cyclic GMP-AMP synthase activity. Activates pyroptosis by catalyzing palmitoylation of gasdermin-D (GSDMD), thereby promoting membrane translocation and pore formation of GSDMD. This chain is Palmitoyltransferase ZDHHC9 (Zdhhc9), found in Mus musculus (Mouse).